A 245-amino-acid chain; its full sequence is LKDGTGIVAAELVAIEKGCEELLSRRKSGWIVTDSEGAIGALRKWKSEDRVTQDIKRAIWQGEREAIDITIRIRGPKTETQEADRAAKKARDRPQVDLETYCNKAEVRQKFREKELTKWQSEWGKRNHRREHIGFPAVTDEWPGLNERAVQLVTGHGYFKAYYRRFKLREGSGLCECGEAEETADHVWWECTVEERERARREFTEAVGTRADVRQKLSEVHRDRLISELNKLADAIVRDDSNLEQ.

Residues leucine 1–alanine 105 enclose the Reverse transcriptase domain. Positions glutamate 106 to glutamine 245 are nucleic acid-binding endonuclease.

It carries out the reaction DNA(n) + a 2'-deoxyribonucleoside 5'-triphosphate = DNA(n+1) + diphosphate. The sequence is that of Retrovirus-related Pol polyprotein from type-1 retrotransposable element R1 from Popillia japonica (Japanese beetle).